The following is a 187-amino-acid chain: Accessory gene regulator protein B (187 aa).

5 consecutive transmembrane segments (helical) span residues 49–69 (LAYI…FYLI), 82–102 (FWCY…VLHF), 107–127 (TLMM…APAA), 143–163 (YFSI…KEPY), and 164–184 (TQFI…IYYS).

Belongs to the AgrB family.

The protein localises to the cell membrane. Its function is as follows. Essential for the production of a quorum sensing system signal molecule, the autoinducing peptide (AIP). This quorum sensing system is responsible for the regulation of the expression of virulence factor genes. Involved in the proteolytic processing of AgrD, the precursor of AIP. The protein is Accessory gene regulator protein B of Staphylococcus aureus (strain MRSA252).